Reading from the N-terminus, the 503-residue chain is Maturase K (503 aa).

Belongs to the intron maturase 2 family. MatK subfamily.

The protein localises to the plastid. Its subcellular location is the chloroplast. Functionally, usually encoded in the trnK tRNA gene intron. Probably assists in splicing its own and other chloroplast group II introns. In Rosa rugosa (Rugosa rose), this protein is Maturase K.